We begin with the raw amino-acid sequence, 232 residues long: Large ribosomal subunit protein uL1 (232 aa).

This sequence belongs to the universal ribosomal protein uL1 family. In terms of assembly, part of the 50S ribosomal subunit.

In terms of biological role, binds directly to 23S rRNA. The L1 stalk is quite mobile in the ribosome, and is involved in E site tRNA release. Functionally, protein L1 is also a translational repressor protein, it controls the translation of the L11 operon by binding to its mRNA. The sequence is that of Large ribosomal subunit protein uL1 from Stenotrophomonas maltophilia (strain R551-3).